Here is a 217-residue protein sequence, read N- to C-terminus: Small ribosomal subunit protein uS3 (217 aa).

The KH type-2 domain maps to 38–106 (IRQLIQTKLA…QVHINIVEIK (69 aa)).

It belongs to the universal ribosomal protein uS3 family. Part of the 30S ribosomal subunit. Forms a tight complex with proteins S10 and S14.

Functionally, binds the lower part of the 30S subunit head. Binds mRNA in the 70S ribosome, positioning it for translation. This Lactococcus lactis subsp. cremoris (strain MG1363) protein is Small ribosomal subunit protein uS3.